The sequence spans 261 residues: MATQDSEVALVTGATSGIGLEIARRLGKEGLRVFVCARGEEGLRTTLKELREAGVEADGRTCDVRSVPEIEALVAAVVERYGPVDVLVNNAGRPGGGATAELADELWLDVVETNLTGVFRVTKQVLKAGGMLERGTGRIVNIASTGGKQGVVHAAPYSASKHGVVGFTKALGLELARTGITVNAVCPGFVETPMAASVREHYSDIWEVSTEEAFDRITARVPIGRYVQPSEVAEMVAYLIGPGAAAVTAQALNVCGGLGNY.

NADP(+) is bound by residues Thr15, Ser16, Ile18, Arg38, Gly39, Asp63, Val64, Asn90, Tyr157, Lys161, Val190, and Thr192. The active-site Proton acceptor is Tyr157.

Belongs to the short-chain dehydrogenases/reductases (SDR) family. In terms of assembly, homotetramer.

The protein operates within antibiotic biosynthesis; actinorhodin biosynthesis. The protein is Putative ketoacyl reductase (actIII) of Streptomyces coelicolor (strain ATCC BAA-471 / A3(2) / M145).